The chain runs to 394 residues: Na(+)/H(+) antiporter NhaA (394 aa).

11 helical membrane-spanning segments follow: residues 14–34, 59–79, 95–115, 125–145, 154–174, 179–199, 213–233, 254–274, 292–312, 328–348, and 363–383; these read AGGL…NSAL, LLLW…GLEV, VFPA…YLLF, GWAI…ALLG, VFLL…IALF, VSLQ…YMNW, LVLW…GVIV, GLHP…NAGV, IATG…WLAV, IFAV…IASL, and LGIL…LRLV.

Belongs to the NhaA Na(+)/H(+) (TC 2.A.33) antiporter family.

Its subcellular location is the cell inner membrane. It carries out the reaction Na(+)(in) + 2 H(+)(out) = Na(+)(out) + 2 H(+)(in). In terms of biological role, na(+)/H(+) antiporter that extrudes sodium in exchange for external protons. In Yersinia pestis bv. Antiqua (strain Antiqua), this protein is Na(+)/H(+) antiporter NhaA.